Reading from the N-terminus, the 122-residue chain is Small ribosomal subunit protein uS13 (122 aa).

The disordered stretch occupies residues 92–122 (HRNGLPVRGQRTHTNARTRKGKAKPIAGKKK). A compositionally biased stretch (basic residues) spans 101-122 (QRTHTNARTRKGKAKPIAGKKK).

The protein belongs to the universal ribosomal protein uS13 family. In terms of assembly, part of the 30S ribosomal subunit. Forms a loose heterodimer with protein S19. Forms two bridges to the 50S subunit in the 70S ribosome.

Its function is as follows. Located at the top of the head of the 30S subunit, it contacts several helices of the 16S rRNA. In the 70S ribosome it contacts the 23S rRNA (bridge B1a) and protein L5 of the 50S subunit (bridge B1b), connecting the 2 subunits; these bridges are implicated in subunit movement. Contacts the tRNAs in the A and P-sites. This is Small ribosomal subunit protein uS13 from Erythrobacter litoralis (strain HTCC2594).